Consider the following 206-residue polypeptide: CASP-like protein 2C1 (206 aa).

The Cytoplasmic segment spans residues 1–31 (MSVLGVGPRTVTPHLRKGMMESSSGISLARA). A helical transmembrane segment spans residues 32-52 (EAFLRLFAILVLVLTACLLGF). Residues 53 to 71 (DTQTKLLFSTIKKTATFRD) lie on the Extracellular side of the membrane. A helical membrane pass occupies residues 72 to 92 (LGALQVVVYVDSVAAGYNLLQ). Topologically, residues 93 to 111 (LGRGFISAKLKGKLINVSY) are cytoplasmic. The helical transmembrane segment at 112 to 132 (VTLPWVCFLLDQAAVYTVFSA) threads the bilayer. Topologically, residues 133-161 (NTAALQASIIAVTGESSLQWMKVCNRYTR) are extracellular. Residues 162-182 (FCIQVGGALLSGYLASLLMVL) form a helical membrane-spanning segment. Over 183 to 206 (LSSLSAFSLFRLYSPKQFHLLKPT) the chain is Cytoplasmic.

It belongs to the Casparian strip membrane proteins (CASP) family. As to quaternary structure, homodimer and heterodimers.

Its subcellular location is the cell membrane. This chain is CASP-like protein 2C1, found in Vitis vinifera (Grape).